The sequence spans 199 residues: Pathogenesis-related 5 protein Cup a 3 (199 aa).

8 disulfide bridges follow: Cys-9–Cys-198, Cys-50–Cys-60, Cys-65–Cys-71, Cys-113–Cys-187, Cys-118–Cys-171, Cys-126–Cys-136, Cys-140–Cys-149, and Cys-150–Cys-158.

The protein belongs to the thaumatin family. In terms of tissue distribution, expressed in pollen.

It is found in the secreted. The protein resides in the extracellular space. The protein localises to the extracellular matrix. It localises to the pollen coat. Its subcellular location is the cytoplasm. It is found in the nucleus. The protein resides in the mitochondrion. The protein localises to the endoplasmic reticulum. It localises to the golgi apparatus. Its subcellular location is the golgi stack. It is found in the vesicle. The protein resides in the vacuole. The chain is Pathogenesis-related 5 protein Cup a 3 from Hesperocyparis arizonica (Arizona cypress).